We begin with the raw amino-acid sequence, 232 residues long: Phosphoribosylaminoimidazole-succinocarboxamide synthase (232 aa).

This sequence belongs to the SAICAR synthetase family.

It carries out the reaction 5-amino-1-(5-phospho-D-ribosyl)imidazole-4-carboxylate + L-aspartate + ATP = (2S)-2-[5-amino-1-(5-phospho-beta-D-ribosyl)imidazole-4-carboxamido]succinate + ADP + phosphate + 2 H(+). Its pathway is purine metabolism; IMP biosynthesis via de novo pathway; 5-amino-1-(5-phospho-D-ribosyl)imidazole-4-carboxamide from 5-amino-1-(5-phospho-D-ribosyl)imidazole-4-carboxylate: step 1/2. The protein is Phosphoribosylaminoimidazole-succinocarboxamide synthase of Finegoldia magna (strain ATCC 29328 / DSM 20472 / WAL 2508) (Peptostreptococcus magnus).